Reading from the N-terminus, the 301-residue chain is tRNA dimethylallyltransferase (301 aa).

8 to 15 serves as a coordination point for ATP; it reads GPTAVGKT. 10–15 is a substrate binding site; the sequence is TAVGKT. Residues 33–36 are interaction with substrate tRNA; the sequence is DSRQ.

Belongs to the IPP transferase family. Monomer. Mg(2+) serves as cofactor.

It carries out the reaction adenosine(37) in tRNA + dimethylallyl diphosphate = N(6)-dimethylallyladenosine(37) in tRNA + diphosphate. Functionally, catalyzes the transfer of a dimethylallyl group onto the adenine at position 37 in tRNAs that read codons beginning with uridine, leading to the formation of N6-(dimethylallyl)adenosine (i(6)A). The protein is tRNA dimethylallyltransferase of Thermosipho africanus (strain TCF52B).